The following is a 513-amino-acid chain: Cytochrome P450 1A2 (513 aa).

O-linked (GlcNAc) serine glycosylation is present at Ser-68. Substrate is bound at residue Phe-225. Cys-456 is a binding site for heme.

Belongs to the cytochrome P450 family. As to quaternary structure, interacts with PGRMC1; the interaction requires PGRMC1 homodimerization. It depends on heme as a cofactor.

It localises to the endoplasmic reticulum membrane. Its subcellular location is the microsome membrane. It catalyses the reaction an organic molecule + reduced [NADPH--hemoprotein reductase] + O2 = an alcohol + oxidized [NADPH--hemoprotein reductase] + H2O + H(+). The enzyme catalyses 17beta-estradiol + reduced [NADPH--hemoprotein reductase] + O2 = 2-hydroxy-17beta-estradiol + oxidized [NADPH--hemoprotein reductase] + H2O + H(+). The catalysed reaction is 17beta-estradiol + reduced [NADPH--hemoprotein reductase] + O2 = 4-hydroxy-17beta-estradiol + oxidized [NADPH--hemoprotein reductase] + H2O + H(+). It carries out the reaction estrone + reduced [NADPH--hemoprotein reductase] + O2 = 2-hydroxyestrone + oxidized [NADPH--hemoprotein reductase] + H2O + H(+). It catalyses the reaction estrone + reduced [NADPH--hemoprotein reductase] + O2 = 4-hydroxyestrone + oxidized [NADPH--hemoprotein reductase] + H2O + H(+). The enzyme catalyses cholesterol + reduced [NADPH--hemoprotein reductase] + O2 = 25-hydroxycholesterol + oxidized [NADPH--hemoprotein reductase] + H2O + H(+). The catalysed reaction is all-trans-retinol + reduced [NADPH--hemoprotein reductase] + O2 = all-trans-retinal + oxidized [NADPH--hemoprotein reductase] + 2 H2O + H(+). It carries out the reaction all-trans-retinal + reduced [NADPH--hemoprotein reductase] + O2 = all-trans-retinoate + oxidized [NADPH--hemoprotein reductase] + H2O + 2 H(+). It catalyses the reaction (5Z,8Z,11Z,14Z)-eicosatetraenoate + reduced [NADPH--hemoprotein reductase] + O2 = (14R,15S)-epoxy-(5Z,8Z,11Z)-eicosatrienoate + oxidized [NADPH--hemoprotein reductase] + H2O + H(+). The enzyme catalyses (5Z,8Z,11Z,14Z)-eicosatetraenoate + reduced [NADPH--hemoprotein reductase] + O2 = (14S,15R)-epoxy-(5Z,8Z,11Z)-eicosatrienoate + oxidized [NADPH--hemoprotein reductase] + H2O + H(+). The catalysed reaction is (5Z,8Z,11Z,14Z,17Z)-eicosapentaenoate + reduced [NADPH--hemoprotein reductase] + O2 = (17R,18S)-epoxy-(5Z,8Z,11Z,14Z)-eicosatetraenoate + oxidized [NADPH--hemoprotein reductase] + H2O + H(+). It carries out the reaction (4Z,7Z,10Z,13Z,16Z,19Z)-docosahexaenoate + reduced [NADPH--hemoprotein reductase] + O2 = (19R,20S)-epoxy-(4Z,7Z,10Z,13Z,16Z)-docosapentaenoate + oxidized [NADPH--hemoprotein reductase] + H2O + H(+). It catalyses the reaction (5S)-hydroperoxy-(6E,8Z,11Z,14Z)-eicosatetraenoate = 5-oxo-(6E,8Z,11Z,14Z)-eicosatetraenoate + H2O. The enzyme catalyses (12S)-hydroperoxy-(5Z,8Z,10E,14Z)-eicosatetraenoate = 12-oxo-(5Z,8Z,10E,14Z)-eicosatetraenoate + H2O. The catalysed reaction is (15S)-hydroperoxy-(5Z,8Z,11Z,13E)-eicosatetraenoate = 15-oxo-(5Z,8Z,11Z,13E)-eicosatetraenoate + H2O. It carries out the reaction (13S)-hydroperoxy-(9Z,11E)-octadecadienoate = 13-oxo-(9Z,11E)-octadecadienoate + H2O. It catalyses the reaction (5Z,8Z,11Z,14Z)-eicosatetraenoate + reduced [NADPH--hemoprotein reductase] + O2 = 13-hydroxy-(5Z,8Z,11Z,14Z)-eicosatetraenoate + oxidized [NADPH--hemoprotein reductase] + H2O + H(+). The enzyme catalyses (5Z,8Z,11Z,14Z)-eicosatetraenoate + reduced [NADPH--hemoprotein reductase] + O2 = 19-hydroxy-(5Z,8Z,11Z,14Z)-eicosatetraenoate + oxidized [NADPH--hemoprotein reductase] + H2O + H(+). The catalysed reaction is (9Z,12Z)-octadecadienoate + reduced [NADPH--hemoprotein reductase] + O2 = 11-hydroxy-(9Z,12Z)-octadecadienoate + oxidized [NADPH--hemoprotein reductase] + H2O + H(+). It participates in cofactor metabolism; retinol metabolism. It functions in the pathway steroid metabolism; cholesterol metabolism. The protein operates within lipid metabolism; arachidonate metabolism. Functionally, a cytochrome P450 monooxygenase involved in the metabolism of various endogenous substrates, including fatty acids, steroid hormones and vitamins. Mechanistically, uses molecular oxygen inserting one oxygen atom into a substrate, and reducing the second into a water molecule, with two electrons provided by NADPH via cytochrome P450 reductase (NADPH--hemoprotein reductase). Catalyzes the hydroxylation of carbon-hydrogen bonds. Exhibits high catalytic activity for the formation of hydroxyestrogens from estrone (E1) and 17beta-estradiol (E2), namely 2-hydroxy E1 and E2. Metabolizes cholesterol toward 25-hydroxycholesterol, a physiological regulator of cellular cholesterol homeostasis. May act as a major enzyme for all-trans retinoic acid biosynthesis in the liver. Catalyzes two successive oxidative transformation of all-trans retinol to all-trans retinal and then to the active form all-trans retinoic acid. Primarily catalyzes stereoselective epoxidation of the last double bond of polyunsaturated fatty acids (PUFA), displaying a strong preference for the (R,S) stereoisomer. Catalyzes bisallylic hydroxylation and omega-1 hydroxylation of PUFA. May also participate in eicosanoids metabolism by converting hydroperoxide species into oxo metabolites (lipoxygenase-like reaction, NADPH-independent). Plays a role in the oxidative metabolism of xenobiotics. Catalyzes the N-hydroxylation of heterocyclic amines and the O-deethylation of phenacetin. Metabolizes caffeine via N3-demethylation. The chain is Cytochrome P450 1A2 (Cyp1a2) from Mus musculus (Mouse).